The sequence spans 324 residues: Protein GET4 (324 aa).

It belongs to the GET4 family. Interacts with GET3A.

It localises to the cytoplasm. The protein resides in the cytosol. Its function is as follows. Involved in the regulation of root hair growth. This is Protein GET4 from Arabidopsis thaliana (Mouse-ear cress).